A 423-amino-acid chain; its full sequence is Diaminobutyrate--2-oxoglutarate transaminase (423 aa).

N6-(pyridoxal phosphate)lysine is present on K271.

It belongs to the class-III pyridoxal-phosphate-dependent aminotransferase family. It depends on pyridoxal 5'-phosphate as a cofactor.

The enzyme catalyses L-2,4-diaminobutanoate + 2-oxoglutarate = L-aspartate 4-semialdehyde + L-glutamate. The protein operates within amine and polyamine biosynthesis; ectoine biosynthesis; L-ectoine from L-aspartate 4-semialdehyde: step 1/3. Functionally, catalyzes reversively the conversion of L-aspartate beta-semialdehyde (ASA) to L-2,4-diaminobutyrate (DABA) by transamination with L-glutamate. This Streptomyces coelicolor (strain ATCC BAA-471 / A3(2) / M145) protein is Diaminobutyrate--2-oxoglutarate transaminase (ectB).